Consider the following 209-residue polypeptide: E3 ubiquitin-protein ligase RNF138 (209 aa).

Residues 18–58 form an RING-type zinc finger; the sequence is CPVCQEVLKTPVRTAACQHVFCRKCFLTAMRESGIHCPLCR. Positions 86, 89, 101, and 105 each coordinate Zn(2+). The segment at 86–105 adopts a C2HC RNF-type zinc-finger fold; sequence CRCCSKKIKFYRMRHHYKSC. Residues 125–154 are disordered; that stretch reads QDSVRSSNRSETSASDNTETYQEDTSSSGH. T142 carries the phosphothreonine modification. The C2H2-type zinc-finger motif lies at 157 to 180; the sequence is FKCPLCQESNFTRQRLLDHCNSNH. One can recognise a UIM domain in the interval 189-207; the sequence is LQLDEETQYQTAVEESFQV.

As to quaternary structure, interacts with NLK. Interacts with XRCC5/Ku80. Interacts with RBBP8/CtIP. Auto-ubiquitinated.

It localises to the chromosome. The catalysed reaction is S-ubiquitinyl-[E2 ubiquitin-conjugating enzyme]-L-cysteine + [acceptor protein]-L-lysine = [E2 ubiquitin-conjugating enzyme]-L-cysteine + N(6)-ubiquitinyl-[acceptor protein]-L-lysine.. It participates in protein modification; protein ubiquitination. Its function is as follows. E3 ubiquitin-protein ligase involved in DNA damage response by promoting DNA resection and homologous recombination. Recruited to sites of double-strand breaks following DNA damage and specifically promotes double-strand break repair via homologous recombination. Two different, non-exclusive, mechanisms have been proposed. According to a report, regulates the choice of double-strand break repair by favoring homologous recombination over non-homologous end joining (NHEJ): acts by mediating ubiquitination of XRCC5/Ku80, leading to remove the Ku complex from DNA breaks, thereby promoting homologous recombination. According to another report, cooperates with UBE2Ds E2 ubiquitin ligases (UBE2D1, UBE2D2, UBE2D3 or UBE2D4) to promote homologous recombination by mediating ubiquitination of RBBP8/CtIP. Together with NLK, involved in the ubiquitination and degradation of TCF/LEF. Also exhibits auto-ubiquitination activity in combination with UBE2K. May act as a negative regulator in the Wnt/beta-catenin-mediated signaling pathway. In Rattus norvegicus (Rat), this protein is E3 ubiquitin-protein ligase RNF138.